Consider the following 122-residue polypeptide: NADH-quinone oxidoreductase subunit A (122 aa).

Transmembrane regions (helical) follow at residues 12-32 (IIIF…VNLI), 66-86 (LVAI…PWAI), and 91-111 (IGGL…VGFI).

Belongs to the complex I subunit 3 family. In terms of assembly, NDH-1 is composed of 14 different subunits. Subunits NuoA, H, J, K, L, M, N constitute the membrane sector of the complex.

It is found in the cell inner membrane. It catalyses the reaction a quinone + NADH + 5 H(+)(in) = a quinol + NAD(+) + 4 H(+)(out). Functionally, NDH-1 shuttles electrons from NADH, via FMN and iron-sulfur (Fe-S) centers, to quinones in the respiratory chain. The immediate electron acceptor for the enzyme in this species is believed to be ubiquinone. Couples the redox reaction to proton translocation (for every two electrons transferred, four hydrogen ions are translocated across the cytoplasmic membrane), and thus conserves the redox energy in a proton gradient. The polypeptide is NADH-quinone oxidoreductase subunit A (Pelagibacter ubique (strain HTCC1062)).